The chain runs to 106 residues: Replication protein A 14 kDa subunit (106 aa).

The protein belongs to the replication factor A protein 3 family. Component of the heterotrimeric canonical replication protein A complex (RPA). Interacts with RPA1B, RPA2A, RPA2B and RPA2C.

The protein resides in the nucleus. Functionally, as part of the replication protein A (RPA/RP-A), a single-stranded DNA-binding heterotrimeric complex, may play an essential role in DNA replication, recombination and repair. Binds and stabilizes single-stranded DNA intermediates, preventing complementary DNA reannealing and recruiting different proteins involved in DNA metabolism. The polypeptide is Replication protein A 14 kDa subunit (RPA3) (Oryza sativa subsp. japonica (Rice)).